Here is a 1101-residue protein sequence, read N- to C-terminus: Leucine-rich repeat receptor-like serine/threonine-protein kinase At1g17230 (1101 aa).

The N-terminal stretch at 1-23 (MRGRICFLAIVILCSFSFILVRS) is a signal peptide. At 24 to 734 (LNEEGRVLLE…WLINGSQRQK (711 aa)) the chain is on the extracellular side. N-linked (GlcNAc...) asparagine glycans are attached at residues Asn-39, Asn-57, Asn-78, and Asn-97. LRR repeat units follow at residues 66–90 (LRTVTSVDLNGMNLSGTLSPLICKL), 91–115 (HGLRKLNVSTNFISGPIPQDLSLCR), 117–137 (LEVLDLCTNRFHGVIPIQLTM), 138–162 (IITLKKLYLCENYLFGSIPRQIGNL), 163–186 (SSLQELVIYSNNLTGVIPPSMAKL), 188–210 (QLRIIRAGRNGFSGVIPSEISGC), 211–234 (ESLKVLGLAENLLEGSLPKQLEKL), 235–258 (QNLTDLILWQNRLSGEIPPSVGNI), 260–282 (RLEVLALHENYFTGSIPREIGKL), 283–306 (TKMKRLYLYTNQLTGEIPREIGNL), 308–329 (DAAEIDFSENQLTGFIPKEFGH), 330–354 (ILNLKLLHLFENILLGPIPRELGEL), 355–379 (TLLEKLDLSINRLNGTIPQELQFLP), 381–402 (LVDLQLFDNQLEGKIPPLIGFY), 403–426 (SNFSVLDMSANSLSGPIPAHFCRF), 427–450 (QTLILLSLGSNKLSGNIPRDLKTC), 451–474 (KSLTKLMLGDNQLTGSLPIELFNL), 476–498 (NLTALELHQNWLSGNISADLGKL), 499–522 (KNLERLRLANNNFTGEIPPEIGNL), 524–546 (KIVGFNISSNQLTGHIPKELGSC), 548–569 (TIQRLDLSGNKFSGYIAQELGQ), 570–593 (LVYLEILRLSDNRLTGEIPHSFGD), 595–618 (TRLMELQLGGNLLSENIPVELGKL), 619–643 (TSLQISLNISHNNLSGTIPDSLGNL), 644–667 (QMLEILYLNDNKLSGEIPASIGNL), and 669–692 (SLLICNISNNNLVGTVPDTAVFQR). Residues Asn-161 and Asn-174 are each glycosylated (N-linked (GlcNAc...) asparagine). Residues Asn-236 and Asn-257 are each glycosylated (N-linked (GlcNAc...) asparagine). N-linked (GlcNAc...) asparagine glycosylation occurs at Asn-368. N-linked (GlcNAc...) asparagine glycosylation is present at Asn-404. N-linked (GlcNAc...) asparagine glycans are attached at residues Asn-476, Asn-490, Asn-510, Asn-521, and Asn-529. N-linked (GlcNAc...) asparagine glycosylation is found at Asn-626 and Asn-631. N-linked (GlcNAc...) asparagine glycans are attached at residues Asn-674 and Asn-728. Residues 735–755 (ILTITCIVIGSVFLITFLGLC) form a helical membrane-spanning segment. Residues 756 to 1101 (WTIKRREPAF…LEEANSSKEI (346 aa)) lie on the Cytoplasmic side of the membrane. Phosphothreonine occurs at positions 788 and 796. The 283-residue stretch at 799–1081 (FSEDVVLGRG…ITEARGSSSL (283 aa)) folds into the Protein kinase domain. ATP-binding positions include 805–813 (LGRGACGTV) and Lys-827. Tyr-874 and Tyr-913 each carry phosphotyrosine. Catalysis depends on Asp-926, which acts as the Proton acceptor. A Phosphoserine modification is found at Ser-960. 2 positions are modified to phosphotyrosine: Tyr-968 and Tyr-975. Thr-976 is modified (phosphothreonine). The segment at 1076–1101 (RGSSSLSSSSITSETPLEEANSSKEI) is disordered. Positions 1078–1088 (SSSLSSSSITS) are enriched in low complexity.

Belongs to the protein kinase superfamily. Ser/Thr protein kinase family.

Its subcellular location is the cell membrane. The enzyme catalyses L-seryl-[protein] + ATP = O-phospho-L-seryl-[protein] + ADP + H(+). It carries out the reaction L-threonyl-[protein] + ATP = O-phospho-L-threonyl-[protein] + ADP + H(+). The sequence is that of Leucine-rich repeat receptor-like serine/threonine-protein kinase At1g17230 from Arabidopsis thaliana (Mouse-ear cress).